A 307-amino-acid chain; its full sequence is 2-carboxy-1,4-naphthoquinone phytyltransferase (307 aa).

8 consecutive transmembrane segments (helical) span residues 27-47 (MYTV…GLTG), 51-71 (GDVF…INLS), 98-118 (LVFL…MSMS), 125-145 (TVLE…GPPF), 147-167 (LGYL…LAIA), 177-197 (FSWN…IILF), 223-243 (LGSQ…AIGV), and 284-304 (FIAV…YGWA).

This sequence belongs to the MenA family. Type 2 subfamily.

It is found in the cell inner membrane. The catalysed reaction is 2-carboxy-1,4-naphthoquinone + phytyl diphosphate + H(+) = demethylphylloquinone + CO2 + diphosphate. It participates in cofactor biosynthesis; phylloquinone biosynthesis. Functionally, involved in the synthesis of phylloquinone (vitamin K1). Catalyzes the transfer of a prenyl chain to 2-carboxy-1,4-naphthoquinone. This chain is 2-carboxy-1,4-naphthoquinone phytyltransferase, found in Synechocystis sp. (strain ATCC 27184 / PCC 6803 / Kazusa).